Consider the following 139-residue polypeptide: Protein archease (139 aa).

Asp12, Asp138, and Ile139 together coordinate Ca(2+).

This sequence belongs to the archease family.

Its function is as follows. Activates the tRNA-splicing ligase complex by facilitating the enzymatic turnover of catalytic subunit RtcB. Acts by promoting the guanylylation of RtcB, a key intermediate step in tRNA ligation. Can also alter the NTP specificity of RtcB such that ATP, dGTP or ITP is used efficiently. In Saccharolobus islandicus (strain Y.N.15.51 / Yellowstone #2) (Sulfolobus islandicus), this protein is Protein archease.